Here is a 142-residue protein sequence, read N- to C-terminus: Large ribosomal subunit protein uL11 (142 aa).

Belongs to the universal ribosomal protein uL11 family. Part of the ribosomal stalk of the 50S ribosomal subunit. Interacts with L10 and the large rRNA to form the base of the stalk. L10 forms an elongated spine to which L12 dimers bind in a sequential fashion forming a multimeric L10(L12)X complex. Post-translationally, one or more lysine residues are methylated.

In terms of biological role, forms part of the ribosomal stalk which helps the ribosome interact with GTP-bound translation factors. The polypeptide is Large ribosomal subunit protein uL11 (Pseudoalteromonas atlantica (strain T6c / ATCC BAA-1087)).